A 123-amino-acid polypeptide reads, in one-letter code: Ribosome-binding factor A (123 aa).

Belongs to the RbfA family. Monomer. Binds 30S ribosomal subunits, but not 50S ribosomal subunits or 70S ribosomes.

The protein localises to the cytoplasm. Its function is as follows. One of several proteins that assist in the late maturation steps of the functional core of the 30S ribosomal subunit. Associates with free 30S ribosomal subunits (but not with 30S subunits that are part of 70S ribosomes or polysomes). Required for efficient processing of 16S rRNA. May interact with the 5'-terminal helix region of 16S rRNA. The polypeptide is Ribosome-binding factor A (Lactobacillus johnsonii (strain CNCM I-12250 / La1 / NCC 533)).